The sequence spans 139 residues: D-ribose pyranase (139 aa).

Catalysis depends on His-20, which acts as the Proton donor. Residues Asp-28, His-106, and 128-130 contribute to the substrate site; that span reads YAN.

It belongs to the RbsD / FucU family. RbsD subfamily. In terms of assembly, homodecamer.

It is found in the cytoplasm. It catalyses the reaction beta-D-ribopyranose = beta-D-ribofuranose. The protein operates within carbohydrate metabolism; D-ribose degradation; D-ribose 5-phosphate from beta-D-ribopyranose: step 1/2. Its function is as follows. Catalyzes the interconversion of beta-pyran and beta-furan forms of D-ribose. This Edwardsiella ictaluri (strain 93-146) protein is D-ribose pyranase.